The following is a 90-amino-acid chain: Sec-independent protein translocase protein TatA (90 aa).

The chain crosses the membrane as a helical span at residues 1-21 (MGGASIWHWIVVGVIVMLLFG). Residues 42 to 90 (GMADEDQPQAPVANQSPPPVSATEPVRTLPPHQGEPAPAANASVDRKVG) are disordered.

This sequence belongs to the TatA/E family. The Tat system comprises two distinct complexes: a TatABC complex, containing multiple copies of TatA, TatB and TatC subunits, and a separate TatA complex, containing only TatA subunits. Substrates initially bind to the TatABC complex, which probably triggers association of the separate TatA complex to form the active translocon.

It localises to the cell inner membrane. Part of the twin-arginine translocation (Tat) system that transports large folded proteins containing a characteristic twin-arginine motif in their signal peptide across membranes. TatA could form the protein-conducting channel of the Tat system. The protein is Sec-independent protein translocase protein TatA of Methylobacterium nodulans (strain LMG 21967 / CNCM I-2342 / ORS 2060).